The following is a 360-amino-acid chain: F-box protein SKP2B (360 aa).

One can recognise an F-box domain in the interval 25 to 76 (ISEWKDIPVELLMKILNLVDDRTVIIASCICSGWRDAVSLGLTRLSLSWCKK). 9 LRR repeats span residues 77–99 (NMNSLVLSLAPKFVKLQTLVLRQ), 101–126 (KPQLEDNAVEAIANHCHELQDLDLSK), 127–152 (SSKITDHSLYSLARGCTNLTKLNLSG), 153–178 (CTSFSDTALAHLTRFCRKLKILNLCG), 180–205 (VEAVSDNTLQAIGENCNQLQSLNLGW), 206–231 (CENISDDGVMSLAYGCPDLRTLDLCS), 232–257 (CVLITDESVVALANRCIHLRSLGLYY), 258–301 (CRNI…NISQ), and 302–333 (CTYLTPSAVQAVCDTFPALHTCSGRHSLVMSG).

In terms of biological role, component of SCF(SKP2B) E3 ubiquitin ligase complexes, which mediate the ubiquitination and subsequent proteasomal degradation of the cyclin-dependent kinase inhibitor KRP1. Does not interact with auxin. The sequence is that of F-box protein SKP2B (SKP2B) from Arabidopsis thaliana (Mouse-ear cress).